We begin with the raw amino-acid sequence, 375 residues long: Glutamate 5-kinase (375 aa).

Lys17 contributes to the ATP binding site. 3 residues coordinate substrate: Ser58, Asp145, and Asn157. Residues 177–178 (SD) and 219–225 (TGGMVTK) each bind ATP. The PUA domain occupies 281 to 359 (QGALTLDDGA…RELARELGPA (79 aa)).

It belongs to the glutamate 5-kinase family.

The protein resides in the cytoplasm. The enzyme catalyses L-glutamate + ATP = L-glutamyl 5-phosphate + ADP. It functions in the pathway amino-acid biosynthesis; L-proline biosynthesis; L-glutamate 5-semialdehyde from L-glutamate: step 1/2. Its function is as follows. Catalyzes the transfer of a phosphate group to glutamate to form L-glutamate 5-phosphate. In Streptomyces avermitilis (strain ATCC 31267 / DSM 46492 / JCM 5070 / NBRC 14893 / NCIMB 12804 / NRRL 8165 / MA-4680), this protein is Glutamate 5-kinase.